A 437-amino-acid polypeptide reads, in one-letter code: Anhydromevalonate phosphate decarboxylase (437 aa).

The Mn(2+) site is built by Asn136 and Glu199. Asp247 functions as the Proton acceptor in the catalytic mechanism.

It belongs to the UbiD family. Prenylated FMN serves as cofactor. It depends on Mn(2+) as a cofactor.

The catalysed reaction is (2E)-3-methyl-5-phosphooxypent-2-enoate + H(+) = isopentenyl phosphate + CO2. It functions in the pathway isoprenoid biosynthesis; isopentenyl diphosphate biosynthesis via mevalonate pathway. In terms of biological role, catalyzes the conversion of trans-anhydromevalonate 5-phosphate (tAHMP) into isopentenyl phosphate. Involved in the archaeal mevalonate (MVA) pathway, which provides fundamental precursors for isoprenoid biosynthesis, such as isopentenyl diphosphate (IPP) and dimethylallyl diphosphate (DMAPP). This chain is Anhydromevalonate phosphate decarboxylase, found in Aeropyrum pernix (strain ATCC 700893 / DSM 11879 / JCM 9820 / NBRC 100138 / K1).